Here is a 341-residue protein sequence, read N- to C-terminus: Anthranilate phosphoribosyltransferase (341 aa).

Residues G81, 84-85 (GD), 91-94 (NVST), 109-117 (KHGNRSVSS), and S121 contribute to the 5-phospho-alpha-D-ribose 1-diphosphate site. Residue G81 participates in anthranilate binding. S93 contributes to the Mg(2+) binding site. N112 contacts anthranilate. R167 contacts anthranilate. Residues D226 and E227 each contribute to the Mg(2+) site.

The protein belongs to the anthranilate phosphoribosyltransferase family. As to quaternary structure, homodimer. The cofactor is Mg(2+).

The catalysed reaction is N-(5-phospho-beta-D-ribosyl)anthranilate + diphosphate = 5-phospho-alpha-D-ribose 1-diphosphate + anthranilate. Its pathway is amino-acid biosynthesis; L-tryptophan biosynthesis; L-tryptophan from chorismate: step 2/5. Catalyzes the transfer of the phosphoribosyl group of 5-phosphorylribose-1-pyrophosphate (PRPP) to anthranilate to yield N-(5'-phosphoribosyl)-anthranilate (PRA). The protein is Anthranilate phosphoribosyltransferase of Saccharophagus degradans (strain 2-40 / ATCC 43961 / DSM 17024).